The chain runs to 424 residues: Tyrosine--tRNA ligase (424 aa).

Tyr-37 provides a ligand contact to L-tyrosine. Residues 42 to 51 (PTADSLHLGH) carry the 'HIGH' region motif. Residues Tyr-175 and Gln-179 each contribute to the L-tyrosine site. Residues 235–239 (KFGKT) carry the 'KMSKS' region motif. Lys-238 serves as a coordination point for ATP. In terms of domain architecture, S4 RNA-binding spans 357-414 (ADLQQALVNAELVPSRGQARTMIGSNAVAINGEKQADPEYVFTDADRLFGRYTLLRRG).

It belongs to the class-I aminoacyl-tRNA synthetase family. TyrS type 1 subfamily. In terms of assembly, homodimer.

It localises to the cytoplasm. It carries out the reaction tRNA(Tyr) + L-tyrosine + ATP = L-tyrosyl-tRNA(Tyr) + AMP + diphosphate + H(+). Its function is as follows. Catalyzes the attachment of tyrosine to tRNA(Tyr) in a two-step reaction: tyrosine is first activated by ATP to form Tyr-AMP and then transferred to the acceptor end of tRNA(Tyr). The polypeptide is Tyrosine--tRNA ligase (Yersinia pseudotuberculosis serotype O:1b (strain IP 31758)).